The primary structure comprises 274 residues: Kit ligand (274 aa).

The signal sequence occupies residues 1–25 (MKKTQTWIITCIYLQLLLFNPLVKT). Residues 26–215 (KGICENRVTD…SNFTGDSNLQ (190 aa)) are Extracellular-facing. Intrachain disulfides connect Cys-29–Cys-114 and Cys-68–Cys-164. 5 N-linked (GlcNAc...) asparagine glycosylation sites follow: Asn-90, Asn-97, Asn-145, Asn-196, and Asn-207. The chain crosses the membrane as a helical span at residues 216 to 238 (WAAMALPAFFSLVIGFAFGALYW). The Cytoplasmic portion of the chain corresponds to 239 to 274 (KKKQPNLTRAVENIQINEEDNEISMLQEKEREFQEV).

It belongs to the SCF family. As to quaternary structure, homodimer, non-covalently linked. A soluble form is produced by proteolytic processing of the extracellular domain.

The protein resides in the cytoplasm. Its subcellular location is the cytoskeleton. The protein localises to the cell membrane. It is found in the cell projection. It localises to the lamellipodium. The protein resides in the filopodium. Its subcellular location is the secreted. In terms of biological role, stimulates the proliferation of mast cells. Able to augment the proliferation of both myeloid and lymphoid hematopoietic progenitors in bone marrow culture. Also mediates cell-cell adhesion. Acts synergistically with other cytokines, probably interleukins. The chain is Kit ligand (KITLG) from Equus caballus (Horse).